Here is a 509-residue protein sequence, read N- to C-terminus: Sperm-associated antigen 6 (509 aa).

ARM repeat units lie at residues 31–70, 73–112, 115–154, 157–196, 199–238, 241–280, 325–365, and 368–409; these read PQNIETLQNAGVMSLLRTLLLDVVPTIQQTAALALGRLAN, DDLAEAVVKCDILPQLVYSLAEQNRFYKKAAAFVLRAVGK, PQLAQAIVDCGALDTLVICLEDFDPGVKEAAAWALRYIAR, AELSQAVVDAGAVPLLVLCIQEPEIALKRIAASALSDIAK, PELAQTVVDAGAVAHLAQMILNPDAKLKHQILSALSQVSK, VDLAEMVVEAEIFPVVLTCLKDKDEYVKKNASTLIREIAK, ENLA…QIGR, and PEHA…NILQ.

As to quaternary structure, interacts with SPAG16 and SPAG17. As to expression, highly expressed in testis.

It is found in the cytoplasm. It localises to the cytoskeleton. Its subcellular location is the cell projection. The protein resides in the cilium. The protein localises to the flagellum. It is found in the cilium axoneme. Its function is as follows. Important for structural integrity of the central apparatus in the sperm tail and for flagellar motility. The sequence is that of Sperm-associated antigen 6 (SPAG6) from Homo sapiens (Human).